A 368-amino-acid chain; its full sequence is C6 finger domain transcription factor tcpZ (368 aa).

The zn(2)-C6 fungal-type DNA-binding region spans 30–56; it reads CDACHASKVRCSGEPICARCQRDNVAC. The segment at 84 to 109 is disordered; the sequence is FIEQRQRPAASQPPGHGTSRDSSVCA.

Its subcellular location is the nucleus. Functionally, transcription factor that specifically regulates the thioclapurine biosynthesis gene cluster. This chain is C6 finger domain transcription factor tcpZ, found in Claviceps purpurea (strain 20.1) (Ergot fungus).